A 131-amino-acid chain; its full sequence is Peptide methionine sulfoxide reductase MsrB (131 aa).

Positions 8 to 130 (LDEWRSMLDP…NSVCIDLRPR (123 aa)) constitute a MsrB domain. Residues cysteine 47, cysteine 50, cysteine 96, and cysteine 99 each coordinate Zn(2+). Cysteine 119 (nucleophile) is an active-site residue.

It belongs to the MsrB Met sulfoxide reductase family. The cofactor is Zn(2+).

It carries out the reaction L-methionyl-[protein] + [thioredoxin]-disulfide + H2O = L-methionyl-(R)-S-oxide-[protein] + [thioredoxin]-dithiol. The chain is Peptide methionine sulfoxide reductase MsrB from Pseudomonas putida (strain GB-1).